The chain runs to 154 residues: Interleukin-2 (154 aa).

An N-terminal signal peptide occupies residues 1–20 (MYRMQLLSCIALSLALITNS). Thr23 is a glycosylation site (O-linked (GalNAc...) threonine). Residues Cys78 and Cys126 are joined by a disulfide bond.

Belongs to the IL-2 family.

The protein resides in the secreted. In terms of biological role, cytokine produced by activated CD4-positive helper T-cells and to a lesser extend activated CD8-positive T-cells and natural killer (NK) cells that plays pivotal roles in the immune response and tolerance. Binds to a receptor complex composed of either the high-affinity trimeric IL-2R (IL2RA/CD25, IL2RB/CD122 and IL2RG/CD132) or the low-affinity dimeric IL-2R (IL2RB and IL2RG). Interaction with the receptor leads to oligomerization and conformation changes in the IL-2R subunits resulting in downstream signaling starting with phosphorylation of JAK1 and JAK3. In turn, JAK1 and JAK3 phosphorylate the receptor to form a docking site leading to the phosphorylation of several substrates including STAT5. This process leads to activation of several pathways including STAT, phosphoinositide-3-kinase/PI3K and mitogen-activated protein kinase/MAPK pathways. Functions as a T-cell growth factor and can increase NK-cell cytolytic activity as well. Promotes strong proliferation of activated B-cells and subsequently immunoglobulin production. Plays a pivotal role in regulating the adaptive immune system by controlling the survival and proliferation of regulatory T-cells, which are required for the maintenance of immune tolerance. Moreover, participates in the differentiation and homeostasis of effector T-cell subsets, including Th1, Th2, Th17 as well as memory CD8-positive T-cells. In Saimiri sciureus (Common squirrel monkey), this protein is Interleukin-2 (IL2).